The following is a 247-amino-acid chain: tRNA pseudouridine synthase A (247 aa).

The active-site Nucleophile is the D53. Residue Y111 participates in substrate binding.

This sequence belongs to the tRNA pseudouridine synthase TruA family. In terms of assembly, homodimer.

The catalysed reaction is uridine(38/39/40) in tRNA = pseudouridine(38/39/40) in tRNA. Its function is as follows. Formation of pseudouridine at positions 38, 39 and 40 in the anticodon stem and loop of transfer RNAs. The sequence is that of tRNA pseudouridine synthase A from Lacticaseibacillus casei (strain BL23) (Lactobacillus casei).